A 105-amino-acid polypeptide reads, in one-letter code: Malonate decarboxylase acyl carrier protein (105 aa).

An O-(phosphoribosyl dephospho-coenzyme A)serine modification is found at Ser-28.

Belongs to the MdcC family. Covalently binds the prosthetic group of malonate decarboxylase.

The protein localises to the cytoplasm. In terms of biological role, subunit of malonate decarboxylase, it is an acyl carrier protein to which acetyl and malonyl thioester residues are bound via a 2'-(5''-phosphoribosyl)-3'-dephospho-CoA prosthetic group and turn over during the catalytic mechanism. The sequence is that of Malonate decarboxylase acyl carrier protein from Bradyrhizobium diazoefficiens (strain JCM 10833 / BCRC 13528 / IAM 13628 / NBRC 14792 / USDA 110).